A 189-amino-acid polypeptide reads, in one-letter code: MRVVLVGPPGAGKGTQAQILASKLSIPKVSTGDIFRANVSGGTELGKKAQAYMDRGDLVPDEITNAMVRDRLAEDDARAGFLLDGFPRNLAQAETLDEMLADLGVKLDVVLELVVDEEEVIRRLAERARIDNRSDDNEETIRHRLVVYREQTAPLVSFYEKRGLLEKIDAVGPIEEVTQRAMTALKSRA.

An ATP-binding site is contributed by 10 to 15 (GAGKGT). Positions 30 to 59 (STGDIFRANVSGGTELGKKAQAYMDRGDLV) are NMP. AMP contacts are provided by residues threonine 31, arginine 36, 57–59 (DLV), 85–88 (GFPR), and glutamine 92. An LID region spans residues 126–136 (ERARIDNRSDD). Arginine 127 contributes to the ATP binding site. Residues arginine 133 and arginine 144 each coordinate AMP. ATP is bound at residue glycine 172.

Belongs to the adenylate kinase family. In terms of assembly, monomer.

The protein localises to the cytoplasm. The catalysed reaction is AMP + ATP = 2 ADP. It participates in purine metabolism; AMP biosynthesis via salvage pathway; AMP from ADP: step 1/1. In terms of biological role, catalyzes the reversible transfer of the terminal phosphate group between ATP and AMP. Plays an important role in cellular energy homeostasis and in adenine nucleotide metabolism. This chain is Adenylate kinase, found in Thermobifida fusca (strain YX).